Here is a 116-residue protein sequence, read N- to C-terminus: Thioredoxin (116 aa).

In terms of domain architecture, Thioredoxin spans 2–113 (TDSEKSATIK…LLRELSDVVP (112 aa)). Residues Cys-37 and Cys-40 are joined by a disulfide bond.

The protein belongs to the thioredoxin family.

Participates in various redox reactions through the reversible oxidation of its active center dithiol to a disulfide and catalyzes dithiol-disulfide exchange reactions. The chain is Thioredoxin (trxA) from Mycobacterium bovis (strain ATCC BAA-935 / AF2122/97).